Here is a 175-residue protein sequence, read N- to C-terminus: Ribosome maturation factor RimM (175 aa).

The PRC barrel domain maps to P96–L172.

It belongs to the RimM family. As to quaternary structure, binds ribosomal protein uS19.

It is found in the cytoplasm. Its function is as follows. An accessory protein needed during the final step in the assembly of 30S ribosomal subunit, possibly for assembly of the head region. Essential for efficient processing of 16S rRNA. May be needed both before and after RbfA during the maturation of 16S rRNA. It has affinity for free ribosomal 30S subunits but not for 70S ribosomes. The sequence is that of Ribosome maturation factor RimM from Mycobacterium avium (strain 104).